The following is a 13477-amino-acid chain: Mucin-3B (13477 aa).

Residues 1–21 (MQLLGLLSILWMLKSSPGATG) form the signal peptide. Low complexity predominate over residues 219–234 (TISSTTRTTERTPLPT). Disordered stretches follow at residues 219 to 243 (TISS…TMSP), 327 to 347 (TRST…TVTD), 360 to 383 (GTLS…TPMT), 513 to 559 (SMTT…PSTL), 622 to 643 (ATTP…STPS), 815 to 839 (TTTN…TGTG), 923 to 968 (TSQT…STTE), 1154 to 1179 (PSMS…TSTL), 1480 to 1511 (SPTV…STEN), 1529 to 1601 (SISA…FPET), 1619 to 1638 (MTST…VTSM), 1692 to 1714 (TTST…TDSM), 1944 to 1968 (TTSA…TFTS), 2064 to 2123 (TPNA…IAKS), 2170 to 2197 (STSM…SGGI), 2275 to 2308 (SSSM…AEST), 2442 to 2462 (RSTP…VKGS), 2476 to 2497 (LSME…TATT), 2509 to 2537 (SHST…GPPT), 2591 to 2610 (SAMS…TETS), 2672 to 2717 (TSTL…FSSS), 2812 to 2832 (TTIT…STST), 2845 to 2867 (TMTE…STTE), 2922 to 2947 (SRIP…SVGI), 3074 to 3109 (ETPS…TPDI), 3309 to 3395 (TTSH…NSNS), 3420 to 3481 (ITTT…SHST), 3545 to 3565 (STTS…STPS), 3654 to 3727 (SITT…STTA), 3740 to 3812 (ITTI…TTAE), 4014 to 4047 (TETT…SIAT), 4067 to 4106 (TSNS…HSTP), 4182 to 4249 (TTET…SSIT), 4269 to 4313 (NSTS…PSFT), 4510 to 4530 (SHST…SHST), 4557 to 4617 (TETT…STSS), 4630 to 4651 (YSPS…STPS), 4802 to 4830 (TSSF…TATG), 4953 to 4986 (HSLP…KTIS), 5128 to 5203 (YTSS…ITTT), 5455 to 5486 (ITNT…PSFT), 5627 to 5680 (TTKT…ATSK), 5834 to 5908 (TTSY…HSPP), 5957 to 5977 (STPS…SSPS), 5990 to 6017 (HSTA…SSIT), 6030 to 6080 (TSSI…PPIF), 6120 to 6150 (TTET…SFTS), 6172 to 6197 (TEST…HTPP), 6456 to 6481 (TETP…HSTP), 6541 to 6598 (TKTT…TSTS), 6846 to 6867 (TTGT…TKTT), 6946 to 6971 (ITTT…RTSH), 6999 to 7021 (TTES…ETRS), 7067 to 7093 (TTET…HSPP), 7170 to 7206 (TETA…TTGI), 7225 to 7244 (SHST…ISHS), 7299 to 7329 (FTSS…TSHS), 7400 to 7433 (SYTS…HRTP), 7476 to 7532 (TETI…TTST), 7578 to 7600 (TGTS…TTSH), 7731 to 7766 (TEIT…ATSK), 7922 to 7996 (SHST…PPIF), 8036 to 8066 (TTET…SFTS), 8088 to 8113 (TEST…HTPP), 8372 to 8397 (TETP…HSTP), 8457 to 8514 (TKTT…TSTS), 8762 to 8783 (TTGT…TKTT), 8862 to 8887 (ITTT…RTSH), 8915 to 8941 (TTES…HSPP), 8983 to 9009 (TTET…HSPP), 9052 to 9122 (AETT…TTGI), 9141 to 9160 (SHST…ISHS), 9215 to 9240 (FTSS…TSTE), 9335 to 9366 (TSSI…HRTP), 9409 to 9465 (TETI…TTST), 9566 to 9589 (SHST…NPSL), 9612 to 9674 (TTET…PPSF), 9734 to 9760 (TTSH…SSFT), 9828 to 9859 (TSSI…HSTP), 9883 to 9908 (TTTE…RSHS), 9921 to 9973 (TTSH…SKTI), 10076 to 10099 (SDST…SPSF), 10120 to 10166 (ITTT…TVPS), 10189 to 10285 (ITTE…SPLS), 10389 to 10425 (TSSI…LSSA), 10462 to 10481 (TTKT…TSTK), 10501 to 10537 (SHSS…TSTS), 10640 to 10660 (TTSF…TPSF), 10750 to 10828 (TTTE…QRSP), 10887 to 11032 (TTET…SPSS), 11044 to 11065 (SHST…HSTP), 11276 to 11317 (TGTE…SPSH), 11446 to 11482 (STTA…ITTT), 11566 to 11697 (TTET…PGFS), 11754 to 11779 (TKTT…HSTP), 11818 to 11949 (SIAT…HSPP), 12067 to 12103 (TSSF…STPV), 12186 to 12220 (PSYT…HSTP), 12280 to 12323 (TETT…STPI), 12364 to 12452 (TTET…TTET), 12468 to 12578 (EMTS…NTPS), 12616 to 12639 (FTTA…DIPT), 12681 to 12700 (SSPS…TSPT), 12785 to 12805 (IPST…LQTS), 12985 to 13011 (TSSM…TVPT), and 13052 to 13086 (SLPT…TPTT). Composition is skewed to low complexity over residues 513 to 538 (SMTT…LSST) and 547 to 559 (TSHT…PSTL). Low complexity predominate over residues 1620-1638 (TSTPPITSSVTPTNTVTSM). A compositionally biased stretch (polar residues) spans 1944-1956 (TTSATMEPPSSSV). Residues 1957 to 1968 (AATDTGQTTFTS) show a composition bias toward low complexity. Residues 2066 to 2091 (NASSMTTSETTYPNSPTGPVTNSMSK) are compositionally biased toward polar residues. Residues 2096-2107 (ASMTQTSSTATS) show a composition bias toward low complexity. Positions 2113 to 2123 (PSGSTTEIAKS) are enriched in polar residues. Positions 2170–2185 (STSMTPSTVSTSIPTS) are enriched in low complexity. Residues 2186–2195 (QPKTVNSSSG) show a composition bias toward polar residues. 2 stretches are compositionally biased toward low complexity: residues 2292 to 2308 (SSPP…AEST) and 2442 to 2458 (RSTP…PTST). A compositionally biased stretch (low complexity) spans 2591 to 2603 (SAMSTSDIPSSPS). Composition is skewed to low complexity over residues 2929-2944 (STDI…TPSS) and 3074-3097 (ETPS…TATS). The span at 3098 to 3109 (PETNTLTPTPDI) shows a compositional bias: polar residues. Over residues 3309-3359 (TTSHSTPSFTSPIATTKTSSHSSPSFTSSIATLETTSHSTPSFTSSITTNS) the composition is skewed to low complexity. Over residues 3360–3370 (HSTPRFSSSIA) the composition is skewed to polar residues. Low complexity predominate over residues 3371-3385 (TRETTSHSTSSFTPS). A compositionally biased stretch (polar residues) spans 3386 to 3395 (IATTKTNSNS). Positions 3420 to 3452 (ITTTETTSHSTPSFTSSMATTKTTSHSTPSFTS) are enriched in low complexity. Residues 3453 to 3462 (PIATRETTSH) are compositionally biased toward polar residues. The segment covering 3463–3481 (STPSFTSLITTTKTTSHST) has biased composition (low complexity). Polar residues predominate over residues 3740-3749 (ITTIETPSHG). Residues 3750–3785 (TPSFTSSITSTETTSHSSPSFISSITTTEITSHSTP) are compositionally biased toward low complexity. Over residues 3786–3812 (RFTSSITTMETPSHSTPNFTSSITTAE) the composition is skewed to polar residues. 2 stretches are compositionally biased toward low complexity: residues 4020-4042 (STPS…PSFT) and 4067-4096 (TSNS…SSMT). Over residues 4097–4106 (ATETTSHSTP) the composition is skewed to polar residues. Composition is skewed to low complexity over residues 4182–4228 (TTET…PSFT) and 4237–4249 (TSHS…SSIT). A compositionally biased stretch (low complexity) spans 4557 to 4574 (TETTSNSSPSFTSSITNT). The span at 4575 to 4601 (KTTSYSPPGFTSSIPATETTSRSPPGF) shows a compositional bias: polar residues. Positions 4602 to 4617 (TSSITTTETTSHSTSS) are enriched in low complexity. Over residues 4802 to 4827 (TSSFTSSITSTETTSHSTPSLTSSIT) the composition is skewed to low complexity. The span at 5137-5158 (TPSHITPSFTSTITTSESTSHS) shows a compositional bias: low complexity. Residues 5159–5170 (NPSLTSAITTTE) are compositionally biased toward polar residues. Low complexity-rich tracts occupy residues 5174-5203 (HSPP…ITTT) and 5458-5486 (TEST…PSFT). A compositionally biased stretch (low complexity) spans 5834 to 5858 (TTSYSTPSITSSITTTERTSHSTPS). Positions 5859–5874 (YTSSIATRETPSHTVP) are enriched in polar residues. The segment covering 5875–5889 (SFTSSITTTESTSHS) has biased composition (low complexity). Positions 5890 to 5901 (NPSLTSAITTTE) are enriched in polar residues. Over residues 6045–6059 (SFTSSITTTDSTSHS) the composition is skewed to low complexity. A compositionally biased stretch (polar residues) spans 6060-6071 (NPSLTSAITTTE). A compositionally biased stretch (low complexity) spans 6172–6185 (TESTSHSTPSFTSS). Polar residues predominate over residues 6186-6197 (IATTETTSHTPP). Residues 6456–6475 (TETPSHSTPSFPSSITTTQS) show a composition bias toward low complexity. A compositionally biased stretch (polar residues) spans 6852-6867 (HNTLGLSSSVDTTKTT). The segment covering 6946–6965 (ITTTETTSHSTPSITSSVTT) has biased composition (low complexity). Residues 6999–7018 (TTESTSHSNPSLTSAITTTE) show a composition bias toward polar residues. The segment covering 7172–7206 (TASHSNPSSTSSITTTESTSHSPPRSTSAIATTGI) has biased composition (low complexity). Low complexity-rich tracts occupy residues 7300–7329 (TSSI…TSHS) and 7400–7427 (SYTS…STET). A compositionally biased stretch (polar residues) spans 7476 to 7491 (TETISHSPPSFTSLTN). A compositionally biased stretch (low complexity) spans 7492–7532 (STETTSHSPPSFTSSSTTTETPSHSTPGFSSSIATSKTTST). Low complexity-rich tracts occupy residues 7734–7766 (TSHS…ATSK) and 7922–7944 (SHST…STPS). A compositionally biased stretch (polar residues) spans 7945–7987 (YTSSIATSETPSHTVPSFTSLITTTDSTSHSNPSLTSAITTTE). Residues 8088–8101 (TESTSHSTPSFTSS) show a composition bias toward low complexity. Over residues 8102–8113 (IATTETTSHTPP) the composition is skewed to polar residues. Low complexity predominate over residues 8372-8391 (TETPSHSTPSFPSSITTTQS). The span at 8768-8783 (HNTLGLSSSVDTTKTT) shows a compositional bias: polar residues. A compositionally biased stretch (low complexity) spans 8862–8881 (ITTTETTSHSTPSITSSVTT). The span at 8915 to 8934 (TTESTSHSNPSLTSAITTTE) shows a compositional bias: polar residues. Composition is skewed to low complexity over residues 9067–9081 (PTTE…SFTS) and 9088–9122 (TASH…TTGI). Over residues 9335–9360 (TSSITTTETPSHSSPSFPSSITSTET) the composition is skewed to low complexity. Positions 9409 to 9424 (TETISHSPPSFTSLTN) are enriched in polar residues. 3 stretches are compositionally biased toward low complexity: residues 9425-9465 (STET…TTST), 9566-9585 (SHST…TSHS), and 9612-9624 (TTET…PSFT). Residues 9625-9661 (SSIATAETTSHSPPSFTSLITTSETPSHSNPSFTSLI) are compositionally biased toward polar residues. A compositionally biased stretch (low complexity) spans 9662–9674 (TTTESTSHSPPSF). Polar residues-rich tracts occupy residues 9892–9903 (NPSLTSAITNTE) and 9921–9933 (TTSH…TSLI). A compositionally biased stretch (low complexity) spans 9934–9973 (TSTETTSHSPPSFTSSSTTTETPSHSTPGFSSSIATSKTI). A compositionally biased stretch (low complexity) spans 10120–10130 (ITTTETTSHST). The segment covering 10131–10166 (PNITSSVTTTERTSHSTPSYTSSIATGETPSHTVPS) has biased composition (polar residues). Composition is skewed to low complexity over residues 10196 to 10271 (HSPP…SFTS) and 10394 to 10421 (TSET…STPS). Polar residues predominate over residues 10750 to 10791 (TTTETTSHSPPRFTSSITTTKTPSDSTPVFTPSIATSETSSH). Low complexity-rich tracts occupy residues 10792 to 10828 (STPG…QRSP), 10887 to 10937 (TTET…SSIT), and 10950 to 11032 (PSSI…SPSS). A compositionally biased stretch (low complexity) spans 11278–11291 (TETTSHSPPHFTSS). The span at 11292-11317 (ITRTKTTSHRPPTFTSSITTTESPSH) shows a compositional bias: polar residues. Positions 11566–11682 (TTETTSHSIP…SHSTSGFTSS (117 aa)) are enriched in low complexity. Polar residues-rich tracts occupy residues 11683–11697 (NATT…PGFS) and 11754–11769 (TKTT…SSIA). Low complexity-rich tracts occupy residues 11770-11779 (STKTTSHSTP) and 11818-11880 (SIAT…SHST). Composition is skewed to polar residues over residues 11881–11896 (PSFT…TSHS) and 11903–11912 (LIPTTKTTLH). 2 stretches are compositionally biased toward low complexity: residues 11913 to 11949 (SPPS…HSPP) and 12067 to 12091 (TSSF…TSSI). A compositionally biased stretch (polar residues) spans 12092–12103 (AVTETPSDSTPV). The span at 12280–12309 (TETTSHSAPNFSSSITSTETTSHSTPSFTS) shows a compositional bias: low complexity. The span at 12310–12323 (AITSTETTSHSTPI) shows a compositional bias: polar residues. Residues 12364 to 12412 (TTETTSHSTPGFASSITTTKTTSHSTPSFTSSIATSNTTSSSTPGFTSS) are compositionally biased toward low complexity. Residues 12413–12439 (IATTETTSRSTPGFTSSIVTTETTSPH) show a composition bias toward polar residues. The segment covering 12440-12452 (TPGFTSSITTTET) has biased composition (low complexity). Over residues 12468–12477 (EMTSHSTPSL) the composition is skewed to polar residues. 6 stretches are compositionally biased toward low complexity: residues 12478-12569 (TFSI…VTTP), 12624-12639 (TSTP…DIPT), 12681-12692 (SSPSIQSTETSS), 12794-12805 (QTTPSIPSLQTS), 12990-13003 (PESE…ASSS), and 13073-13086 (TSET…TPTT). The 34-residue stretch at 13130–13163 (SGDRCQLQTRCQNGGQWDGLKCQCPSTFYGSSCE) folds into the EGF-like domain. 2 disulfides stabilise this stretch: cysteine 13134–cysteine 13140 and cysteine 13153–cysteine 13162. Residues 13172–13297 (DVVETEVGME…DSIKVNNNSK (126 aa)) enclose the SEA domain. A helical transmembrane segment spans residues 13381–13401 (LVGGLTAGAALLVLLLLALGV).

In terms of processing, highly O-glycosylated and probably also N-glycosylated. Fetal and adult small intestine and fetal and adult colon.

Its subcellular location is the membrane. In terms of biological role, major glycoprotein component of a variety of mucus gels. Thought to provide a protective, lubricating barrier against particles and infectious agents at mucosal surfaces. This chain is Mucin-3B, found in Homo sapiens (Human).